A 97-amino-acid chain; its full sequence is Mitochondrial import inner membrane translocase subunit Tim8 A (97 aa).

The Twin CX3C motif motif lies at 43–66 (CWEKCMDKPGPKLDSRAEACFVNC). Disulfide bonds link C43-C66 and C47-C62. S57, S87, S94, and S96 each carry phosphoserine.

It belongs to the small Tim family. Heterohexamer; composed of 3 copies of TIMM8A and 3 copies of TIMM13, named soluble 70 kDa complex. Associates with the TIM22 complex, whose core is composed of TIMM22.

Its subcellular location is the mitochondrion inner membrane. In terms of biological role, mitochondrial intermembrane chaperone that participates in the import and insertion of some multi-pass transmembrane proteins into the mitochondrial inner membrane. Also required for the transfer of beta-barrel precursors from the TOM complex to the sorting and assembly machinery (SAM complex) of the outer membrane. Acts as a chaperone-like protein that protects the hydrophobic precursors from aggregation and guide them through the mitochondrial intermembrane space. The TIMM8-TIMM13 complex mediates the import of proteins such as TIMM23, SLC25A12/ARALAR1 and SLC25A13/ARALAR2, while the predominant TIMM9-TIMM10 70 kDa complex mediates the import of much more proteins. The sequence is that of Mitochondrial import inner membrane translocase subunit Tim8 A (TIMM8A) from Bos taurus (Bovine).